A 129-amino-acid chain; its full sequence is Fluoride-specific ion channel FluC (129 aa).

A run of 4 helical transmembrane segments spans residues 1–21, 35–55, 71–91, and 105–125; these read MLMK…LGSA, GGLP…IGFI, LFLV…IFEN, and AYLA…TFFA. Na(+) is bound by residues G79 and T82.

It belongs to the fluoride channel Fluc/FEX (TC 1.A.43) family.

It localises to the cell inner membrane. The catalysed reaction is fluoride(in) = fluoride(out). Its activity is regulated as follows. Na(+) is not transported, but it plays an essential structural role and its presence is essential for fluoride channel function. In terms of biological role, fluoride-specific ion channel. Important for reducing fluoride concentration in the cell, thus reducing its toxicity. This is Fluoride-specific ion channel FluC from Chlorobium phaeobacteroides (strain DSM 266 / SMG 266 / 2430).